The chain runs to 338 residues: Large ribosomal subunit protein uL3 (338 aa).

The tract at residues 1 to 37 (MPQPSRPRKGSMGFSPRKRAESEVPRIRSWASNDGAP) is disordered.

Belongs to the universal ribosomal protein uL3 family. As to quaternary structure, part of the 50S ribosomal subunit. Forms a cluster with proteins L14 and L24e.

Its function is as follows. One of the primary rRNA binding proteins, it binds directly near the 3'-end of the 23S rRNA, where it nucleates assembly of the 50S subunit. The sequence is that of Large ribosomal subunit protein uL3 from Haloquadratum walsbyi (strain DSM 16790 / HBSQ001).